The following is a 714-amino-acid chain: Polyribonucleotide nucleotidyltransferase (714 aa).

Mg(2+) is bound by residues Asp488 and Asp494. The KH domain maps to 555-614; sequence PRIEVMNIPTDKIRDVIGSGGKVIREIVEKTGAKINIEDDGTVKIASSNGKEIEAAKKWI. Positions 624-692 constitute an S1 motif domain; it reads GEIYEGTVVK…ERGKVRLSMK (69 aa).

The protein belongs to the polyribonucleotide nucleotidyltransferase family. It depends on Mg(2+) as a cofactor.

The protein localises to the cytoplasm. It carries out the reaction RNA(n+1) + phosphate = RNA(n) + a ribonucleoside 5'-diphosphate. Involved in mRNA degradation. Catalyzes the phosphorolysis of single-stranded polyribonucleotides processively in the 3'- to 5'-direction. The polypeptide is Polyribonucleotide nucleotidyltransferase (Brucella abortus biovar 1 (strain 9-941)).